The chain runs to 370 residues: Forkhead box protein I1-A (370 aa).

Disordered regions lie at residues 1-28, 212-269, and 342-370; these read MNPV…AQEA, DNGN…CPSP, and SSLP…QGRY. Residues 127 to 221 constitute a DNA-binding region (fork-head); sequence RPPYSYSALI…DNGNFRRKRK (95 aa). Over residues 232–245 the composition is skewed to basic and acidic residues; sequence AKREEDHVSPKGKE. Over residues 349-370 the composition is skewed to low complexity; sequence QKQPPYLQQLHPQQSPLYQGRY.

Initially localized to the animal hemisphere (the presumptive ectoderm) of early-mid blastula embryos. Becomes restricted to head placodes, excluding the otic placodes, by the tailbud stages.

The protein localises to the nucleus. Transcription factor. Essential for ventral specification of the early cephalic (head) ectoderm during gastrulation, playing a role in the non-neural versus neural cell fate choice. Binds to DNA via the target sequence 5'-[AG]TAAA[CT]A-3', with 5'-ATAAACA-3' being the preferred binding site. In Xenopus laevis (African clawed frog), this protein is Forkhead box protein I1-A (foxi1-a).